The primary structure comprises 340 residues: uncharacterized protein (340 aa).

The helical transmembrane segment at 6–26 (ITFGLLVLMVCVILFVLYVQL) threads the bilayer.

The protein localises to the cell membrane. This is an uncharacterized protein from Bacillus subtilis (strain 168).